The primary structure comprises 509 residues: Oligo-1,6-glucosidase (509 aa).

The Nucleophile role is filled by D198. Catalysis depends on E254, which acts as the Proton donor.

It belongs to the glycosyl hydrolase 13 family.

The protein localises to the cytoplasm. The enzyme catalyses Hydrolysis of (1-&gt;6)-alpha-D-glucosidic linkages in some oligosaccharides produced from starch and glycogen by alpha-amylase, and in isomaltose.. The protein is Oligo-1,6-glucosidase (malL) of Bacillus sp. (strain F5).